The chain runs to 184 residues: Peptidyl-tRNA hydrolase (184 aa).

Tyrosine 13 serves as a coordination point for tRNA. The active-site Proton acceptor is histidine 18. Positions 59, 61, and 105 each coordinate tRNA.

This sequence belongs to the PTH family. Monomer.

It is found in the cytoplasm. It catalyses the reaction an N-acyl-L-alpha-aminoacyl-tRNA + H2O = an N-acyl-L-amino acid + a tRNA + H(+). In terms of biological role, hydrolyzes ribosome-free peptidyl-tRNAs (with 1 or more amino acids incorporated), which drop off the ribosome during protein synthesis, or as a result of ribosome stalling. Functionally, catalyzes the release of premature peptidyl moieties from peptidyl-tRNA molecules trapped in stalled 50S ribosomal subunits, and thus maintains levels of free tRNAs and 50S ribosomes. The protein is Peptidyl-tRNA hydrolase of Sulfurimonas denitrificans (strain ATCC 33889 / DSM 1251) (Thiomicrospira denitrificans (strain ATCC 33889 / DSM 1251)).